We begin with the raw amino-acid sequence, 369 residues long: Isopentenyl-diphosphate delta-isomerase (369 aa).

Residue R9–K10 coordinates substrate. FMN is bound by residues T65, G66 to T68, S96, and N125. Substrate is bound at residue S96–R98. A substrate-binding site is contributed by Q160. E161 is a Mg(2+) binding site. Residues K193, S218, T223, G275–R277, and A296–L297 contribute to the FMN site.

It belongs to the IPP isomerase type 2 family. Homooctamer. Dimer of tetramers. The cofactor is FMN. It depends on NADPH as a cofactor. Mg(2+) serves as cofactor.

The protein resides in the cytoplasm. It carries out the reaction isopentenyl diphosphate = dimethylallyl diphosphate. Functionally, involved in the biosynthesis of isoprenoids. Catalyzes the 1,3-allylic rearrangement of the homoallylic substrate isopentenyl (IPP) to its allylic isomer, dimethylallyl diphosphate (DMAPP). In Sulfurisphaera tokodaii (strain DSM 16993 / JCM 10545 / NBRC 100140 / 7) (Sulfolobus tokodaii), this protein is Isopentenyl-diphosphate delta-isomerase.